Reading from the N-terminus, the 686-residue chain is MAM domain-containing protein 2 (686 aa).

An N-terminal signal peptide occupies residues 1–18; that stretch reads MLLEGVLLVVQALQLASA. 4 consecutive MAM domains span residues 24 to 169, 168 to 329, 340 to 498, and 507 to 666; these read GSCA…YCIE, IECD…HCQN, TSCD…NCRS, and GECT…PCAG. 2 N-linked (GlcNAc...) asparagine glycosylation sites follow: Asn134 and Asn329. An N-linked (GlcNAc...) asparagine glycan is attached at Asn524. The disordered stretch occupies residues 665–686; sequence AGMEDTTEQSSGYSEDLNEIEY.

O-glycosylated; contains chondroitin sulfate.

The protein resides in the secreted. It is found in the extracellular space. It localises to the extracellular matrix. The sequence is that of MAM domain-containing protein 2 (Mamdc2) from Mus musculus (Mouse).